We begin with the raw amino-acid sequence, 165 residues long: MLGVQKKRSTRKTAARKTVVRKPAAKKTAAKKAPVRKVAAKKTVARKTVAKKTVAARKPVAKKATAKKAPVRKVAAKKTVARKTVAKKTVAARKPVAKRVASTKKSSVAVKAGVCMKKHKHTAACGRVAASGVKVCASAAKRKTNPNRSRTAHSWRQQLMKLVAR.

Composition is skewed to basic residues over residues 1 to 50 and 59 to 80; these read MLGV…KTVA and PVAK…KKTV. The tract at residues 1–80 is disordered; it reads MLGVQKKRST…VRKVAAKKTV (80 aa).

It belongs to the histone H1/H5 family. HCT subfamily.

In terms of biological role, might have a role in establishing the nucleoid structure of elementary bodies. This Chlamydia trachomatis protein is Histone H1-like protein HC2 (hctB).